Here is a 349-residue protein sequence, read N- to C-terminus: Holliday junction branch migration complex subunit RuvB (349 aa).

The large ATPase domain (RuvB-L) stretch occupies residues 1-185; sequence MSQEKERLIS…FGSIFRLDFY (185 aa). Residues leucine 24, arginine 25, glycine 66, lysine 69, threonine 70, threonine 71, 132-134, arginine 175, tyrosine 185, and arginine 222 contribute to the ATP site; that span reads EDY. Position 70 (threonine 70) interacts with Mg(2+). A small ATPAse domain (RuvB-S) region spans residues 186 to 256; the sequence is DEEAIHDIVR…IAAESLACLE (71 aa). A head domain (RuvB-H) region spans residues 259 to 349; it reads KLGLDEIDHK…QQGLWTENGS (91 aa). DNA contacts are provided by arginine 314 and arginine 319.

Belongs to the RuvB family. As to quaternary structure, homohexamer. Forms an RuvA(8)-RuvB(12)-Holliday junction (HJ) complex. HJ DNA is sandwiched between 2 RuvA tetramers; dsDNA enters through RuvA and exits via RuvB. An RuvB hexamer assembles on each DNA strand where it exits the tetramer. Each RuvB hexamer is contacted by two RuvA subunits (via domain III) on 2 adjacent RuvB subunits; this complex drives branch migration. In the full resolvosome a probable DNA-RuvA(4)-RuvB(12)-RuvC(2) complex forms which resolves the HJ.

It localises to the cytoplasm. It catalyses the reaction ATP + H2O = ADP + phosphate + H(+). Its function is as follows. The RuvA-RuvB-RuvC complex processes Holliday junction (HJ) DNA during genetic recombination and DNA repair, while the RuvA-RuvB complex plays an important role in the rescue of blocked DNA replication forks via replication fork reversal (RFR). RuvA specifically binds to HJ cruciform DNA, conferring on it an open structure. The RuvB hexamer acts as an ATP-dependent pump, pulling dsDNA into and through the RuvAB complex. RuvB forms 2 homohexamers on either side of HJ DNA bound by 1 or 2 RuvA tetramers; 4 subunits per hexamer contact DNA at a time. Coordinated motions by a converter formed by DNA-disengaged RuvB subunits stimulates ATP hydrolysis and nucleotide exchange. Immobilization of the converter enables RuvB to convert the ATP-contained energy into a lever motion, pulling 2 nucleotides of DNA out of the RuvA tetramer per ATP hydrolyzed, thus driving DNA branch migration. The RuvB motors rotate together with the DNA substrate, which together with the progressing nucleotide cycle form the mechanistic basis for DNA recombination by continuous HJ branch migration. Branch migration allows RuvC to scan DNA until it finds its consensus sequence, where it cleaves and resolves cruciform DNA. The sequence is that of Holliday junction branch migration complex subunit RuvB from Dehalococcoides mccartyi (strain CBDB1).